We begin with the raw amino-acid sequence, 691 residues long: Threonine--tRNA ligase (691 aa).

Residues 1–22 (MSVPAQPAPGADGGDPRQPIRV) are disordered. The 73-residue stretch at 1-73 (MSVPAQPAPG…DADAEVTPIA (73 aa)) folds into the TGS domain. The interval 268–574 (DHRKLGVELD…LTEHYAGAFP (307 aa)) is catalytic. Zn(2+)-binding residues include Cys373, His424, and His551.

This sequence belongs to the class-II aminoacyl-tRNA synthetase family. Homodimer. Zn(2+) serves as cofactor.

The protein localises to the cytoplasm. It catalyses the reaction tRNA(Thr) + L-threonine + ATP = L-threonyl-tRNA(Thr) + AMP + diphosphate + H(+). Catalyzes the attachment of threonine to tRNA(Thr) in a two-step reaction: L-threonine is first activated by ATP to form Thr-AMP and then transferred to the acceptor end of tRNA(Thr). Also edits incorrectly charged L-seryl-tRNA(Thr). The chain is Threonine--tRNA ligase from Mycobacterium ulcerans (strain Agy99).